A 355-amino-acid chain; its full sequence is Anhydro-N-acetylmuramic acid kinase (355 aa).

9-16 (GTSLDGVD) serves as a coordination point for ATP.

This sequence belongs to the anhydro-N-acetylmuramic acid kinase family.

The enzyme catalyses 1,6-anhydro-N-acetyl-beta-muramate + ATP + H2O = N-acetyl-D-muramate 6-phosphate + ADP + H(+). Its pathway is amino-sugar metabolism; 1,6-anhydro-N-acetylmuramate degradation. It functions in the pathway cell wall biogenesis; peptidoglycan recycling. In terms of biological role, catalyzes the specific phosphorylation of 1,6-anhydro-N-acetylmuramic acid (anhMurNAc) with the simultaneous cleavage of the 1,6-anhydro ring, generating MurNAc-6-P. Is required for the utilization of anhMurNAc either imported from the medium or derived from its own cell wall murein, and thus plays a role in cell wall recycling. This is Anhydro-N-acetylmuramic acid kinase from Paramagnetospirillum magneticum (strain ATCC 700264 / AMB-1) (Magnetospirillum magneticum).